Consider the following 537-residue polypeptide: Cytoplasmic dynein 2 intermediate chain 2 (537 aa).

Ser-15 carries the post-translational modification Phosphoserine. The DYNLL2 binding stretch occupies residues 80-93 (RTHADAQVQTEAPE). Residues 107–132 (LRLEAFLRRVEAMVIRELNNNWQSHA) form a DYNLRB1 binding region. WD repeat units follow at residues 216–256 (EVPS…DPLL), 265–309 (THTD…QLRL), 391–431 (PHGG…PLTS), 434–474 (LSHK…QKPT), and 481–521 (QDGS…TEQG).

It belongs to the dynein light intermediate chain family. The cytoplasmic dynein 2 complex consists of two catalytic heavy chains (HCs) and a number of non-catalytic subunits presented by intermediate chains (ICs), light intermediate chains (LICs) and light chains (LCs). Among them, a heavy chain (DYNC2H1), two intermediate chains (DYNC2I2 and DYNC2I1), a light intermediate chain (DYNC2LI1), and a light chain (DYNLT2B) are unique to the cytoplasmic dynein complex 2, but a subset of the light chains are also shared by dynein-1 and dynein-2 complexes. Interacts with DYNC2I1; their C-terminal domains each bind a copy of the heavy chain, and their extended N-terminal regions are held together by an array of light chain dimers. Interacts with DYNLL2; this interaction is essential for dynein-2-mediated retrograde trafficking of ciliary proteins. Interacts with DYNLRB1; this interaction is essential for dynein-2-mediated retrograde trafficking of ciliary proteins. Interacts (via the WD domains) with MAP3K7 and TAB3. Interacts (via WD domains) with TAB2 (via C-terminus). Interacts (via WD domains) with TRAF6 (via TRAF-type domains). As to expression, expressed in brain, thymus, heart, lung, liver, spleen, kidney, testis and intestine.

It localises to the cytoplasm. The protein localises to the cytoskeleton. It is found in the cilium basal body. Its subcellular location is the cilium axoneme. The protein resides in the cell projection. It localises to the cilium. The protein localises to the microtubule organizing center. It is found in the centrosome. Its subcellular location is the filopodium. In terms of biological role, acts as one of several non-catalytic accessory components of the cytoplasmic dynein 2 complex (dynein-2 complex), a motor protein complex that drives the movement of cargos along microtubules within cilia and flagella in concert with the intraflagellar transport (IFT) system. DYNC2I2 plays a major role in retrograde ciliary protein trafficking and in ciliogenesis. Required also to maintain a functional transition zone. Its function is as follows. Acts as a negative regulator of the Toll-like and IL-1R receptor signaling pathways. Inhibits the MAP3K7-induced NF-kappa-B activation pathway. Inhibits MAP3K7 phosphorylation at 'Thr-184' and 'Thr-187' upon Il-1 beta stimulation. In Mus musculus (Mouse), this protein is Cytoplasmic dynein 2 intermediate chain 2 (Dync2i2).